The chain runs to 257 residues: Chymotrypsin-like protease VLCTLP (257 aa).

The N-terminal stretch at 1-18 (MVLIRVLANLLLLQLSYA) is a signal peptide. Residues 19–24 (QKSSEL) constitute a propeptide that is removed on maturation. Residues 25–248 (VVGGDECNIN…YSDWIQSIIA (224 aa)) enclose the Peptidase S1 domain. Disulfide bonds link cysteine 31-cysteine 162, cysteine 49-cysteine 65, cysteine 97-cysteine 255, cysteine 141-cysteine 209, cysteine 173-cysteine 188, and cysteine 199-cysteine 224. Asparagine 44 carries N-linked (GlcNAc...) asparagine glycosylation. Histidine 64 (charge relay system) is an active-site residue. Asparagine 100 carries N-linked (GlcNAc...) asparagine glycosylation. The active-site Charge relay system is the aspartate 109. 2 N-linked (GlcNAc...) asparagine glycosylation sites follow: asparagine 116 and asparagine 153. Catalysis depends on serine 203, which acts as the Charge relay system. N-linked (GlcNAc...) asparagine glycosylation occurs at asparagine 250.

This sequence belongs to the peptidase S1 family. Snake venom subfamily. In terms of assembly, monomer. In terms of processing, partial deglycosylation has not effect on enzyme activity. Expressed by the venom gland.

It localises to the secreted. Inhibited by PMSF. Snake venom serine protease with tyrosine-specific chymotrypsin-like activity. Hydrolyzes the N-acetyl-L-tyrosine ethyl ester (ATEE). Has weak fibrinogenolytic activity. Weakly hydrolyzes azocasein, Aalpha-chain (FGA) and more slowly Bbeta-chain (FGB) of fibrinogen. Optimal substrates are angiotensins I and II (AGT). The polypeptide is Chymotrypsin-like protease VLCTLP (Macrovipera lebetinus (Levantine viper)).